Consider the following 140-residue polypeptide: Ribosomal RNA large subunit methyltransferase H (140 aa).

The S-adenosyl-L-methionine site is built by Leu55 and Gly87.

Belongs to the RNA methyltransferase RlmH family. Homodimer.

The protein localises to the cytoplasm. The catalysed reaction is pseudouridine(1915) in 23S rRNA + S-adenosyl-L-methionine = N(3)-methylpseudouridine(1915) in 23S rRNA + S-adenosyl-L-homocysteine + H(+). Specifically methylates the pseudouridine at position 1915 (m3Psi1915) in 23S rRNA. The chain is Ribosomal RNA large subunit methyltransferase H from Rhizorhabdus wittichii (strain DSM 6014 / CCUG 31198 / JCM 15750 / NBRC 105917 / EY 4224 / RW1) (Sphingomonas wittichii).